A 336-amino-acid chain; its full sequence is Sex determination protein tasselseed-2 (336 aa).

An NAD(+)-binding site is contributed by 59–83 (IVTGGARGIGEAIVRLFAKHGARVV). Ser-194 contributes to the substrate binding site. Residue Tyr-207 is the Proton acceptor of the active site.

The protein belongs to the short-chain dehydrogenases/reductases (SDR) family.

Its function is as follows. Required for stage-specific floral organ abortion. The polypeptide is Sex determination protein tasselseed-2 (TS2) (Zea mays (Maize)).